The following is a 217-amino-acid chain: Protein GrpE (217 aa).

It belongs to the GrpE family. Homodimer.

The protein localises to the cytoplasm. Functionally, participates actively in the response to hyperosmotic and heat shock by preventing the aggregation of stress-denatured proteins, in association with DnaK and GrpE. It is the nucleotide exchange factor for DnaK and may function as a thermosensor. Unfolded proteins bind initially to DnaJ; upon interaction with the DnaJ-bound protein, DnaK hydrolyzes its bound ATP, resulting in the formation of a stable complex. GrpE releases ADP from DnaK; ATP binding to DnaK triggers the release of the substrate protein, thus completing the reaction cycle. Several rounds of ATP-dependent interactions between DnaJ, DnaK and GrpE are required for fully efficient folding. This Mycoplasma genitalium (strain ATCC 33530 / DSM 19775 / NCTC 10195 / G37) (Mycoplasmoides genitalium) protein is Protein GrpE.